The chain runs to 312 residues: 4-hydroxyproline 2-epimerase (312 aa).

Cys-88 (proton acceptor) is an active-site residue. Substrate-binding positions include 89 to 90, His-208, and Asp-234; that span reads GH. Cys-238 functions as the Proton donor in the catalytic mechanism. 239-240 contacts substrate; sequence GT.

It belongs to the proline racemase family.

The catalysed reaction is trans-4-hydroxy-L-proline = cis-4-hydroxy-D-proline. Its function is as follows. Catalyzes the epimerization of trans-4-hydroxy-L-proline (t4LHyp) to cis-4-hydroxy-D-proline (c4DHyp). Is likely involved in a degradation pathway that converts t4LHyp to alpha-ketoglutarate. Can also catalyze the epimerization of trans-3-hydroxy-L-proline (t3LHyp) to cis-3-hydroxy-D-proline (c3DHyp), albeit with 500-fold lower efficiency. Displays no proline racemase activity. This is 4-hydroxyproline 2-epimerase from Xanthomonas campestris pv. campestris (strain ATCC 33913 / DSM 3586 / NCPPB 528 / LMG 568 / P 25).